Here is a 51-residue protein sequence, read N- to C-terminus: uncharacterized protein (51 aa).

The segment at 1 to 28 (MQQPQNITTSSISNNNNNNTSLTLQQQQ) is disordered. A coiled-coil region spans residues 13–47 (SNNNNNNTSLTLQQQQEQLQQLQIKRKRNLMKQLQ).

This is an uncharacterized protein from Dictyostelium discoideum (Social amoeba).